The following is a 323-amino-acid chain: Homoserine kinase (323 aa).

An ATP-binding site is contributed by 97 to 107 (PHGRGMGSSGA).

It belongs to the GHMP kinase family. Homoserine kinase subfamily.

It is found in the cytoplasm. It catalyses the reaction L-homoserine + ATP = O-phospho-L-homoserine + ADP + H(+). It participates in amino-acid biosynthesis; L-threonine biosynthesis; L-threonine from L-aspartate: step 4/5. Functionally, catalyzes the ATP-dependent phosphorylation of L-homoserine to L-homoserine phosphate. This Leifsonia xyli subsp. xyli (strain CTCB07) protein is Homoserine kinase.